Here is a 37-residue protein sequence, read N- to C-terminus: M-oxotoxin-Ot2c (37 aa).

In terms of tissue distribution, expressed by the venom gland.

The protein localises to the secreted. Functionally, disrupts biological membranes, particularly those rich in phosphocholine. Has antimicrobial activity against Gram-negative bacterium E.coli, Gram-positive bacteria B.subtilis and S.aureus, and hemolytic activity against sheep, pig and guinea pig red blood cells. Has insecticidal activity against S.frugiperda ovarian cells by opening non-selective ion channels. Enhances the insecticidal activity of spider venom neurotoxic peptides. This chain is M-oxotoxin-Ot2c, found in Oxyopes takobius (Lynx spider).